Here is a 277-residue protein sequence, read N- to C-terminus: NAD kinase (277 aa).

Residue Asp-67 is the Proton acceptor of the active site. NAD(+)-binding positions include 67–68 (DG), Arg-72, 137–138 (NE), Lys-148, Arg-165, Asp-167, 178–183 (TGYAMS), Leu-202, and Gln-236.

It belongs to the NAD kinase family. A divalent metal cation serves as cofactor.

It is found in the cytoplasm. It catalyses the reaction NAD(+) + ATP = ADP + NADP(+) + H(+). Functionally, involved in the regulation of the intracellular balance of NAD and NADP, and is a key enzyme in the biosynthesis of NADP. Catalyzes specifically the phosphorylation on 2'-hydroxyl of the adenosine moiety of NAD to yield NADP. In Pyrococcus furiosus (strain ATCC 43587 / DSM 3638 / JCM 8422 / Vc1), this protein is NAD kinase.